A 199-amino-acid chain; its full sequence is ATP-dependent Clp protease proteolytic subunit (199 aa).

S99 functions as the Nucleophile in the catalytic mechanism. H124 is an active-site residue.

The protein belongs to the peptidase S14 family. In terms of assembly, fourteen ClpP subunits assemble into 2 heptameric rings which stack back to back to give a disk-like structure with a central cavity, resembling the structure of eukaryotic proteasomes.

It is found in the cytoplasm. It carries out the reaction Hydrolysis of proteins to small peptides in the presence of ATP and magnesium. alpha-casein is the usual test substrate. In the absence of ATP, only oligopeptides shorter than five residues are hydrolyzed (such as succinyl-Leu-Tyr-|-NHMec, and Leu-Tyr-Leu-|-Tyr-Trp, in which cleavage of the -Tyr-|-Leu- and -Tyr-|-Trp bonds also occurs).. Functionally, cleaves peptides in various proteins in a process that requires ATP hydrolysis. Has a chymotrypsin-like activity. Plays a major role in the degradation of misfolded proteins. The sequence is that of ATP-dependent Clp protease proteolytic subunit from Moorella thermoacetica (strain ATCC 39073 / JCM 9320).